An 880-amino-acid chain; its full sequence is DNA mismatch repair protein MutS (880 aa).

624 to 631 (GPNMAGKS) is a binding site for ATP.

It belongs to the DNA mismatch repair MutS family.

Functionally, this protein is involved in the repair of mismatches in DNA. It is possible that it carries out the mismatch recognition step. This protein has a weak ATPase activity. The chain is DNA mismatch repair protein MutS from Alkaliphilus metalliredigens (strain QYMF).